The primary structure comprises 294 residues: NAD kinase (294 aa).

Aspartate 74 serves as the catalytic Proton acceptor. NAD(+)-binding positions include aspartate 74–glycine 75, asparagine 148–glutamate 149, histidine 159, arginine 176, aspartate 178, threonine 189–serine 194, and glutamine 249.

The protein belongs to the NAD kinase family. The cofactor is a divalent metal cation.

The protein resides in the cytoplasm. The catalysed reaction is NAD(+) + ATP = ADP + NADP(+) + H(+). Functionally, involved in the regulation of the intracellular balance of NAD and NADP, and is a key enzyme in the biosynthesis of NADP. Catalyzes specifically the phosphorylation on 2'-hydroxyl of the adenosine moiety of NAD to yield NADP. This is NAD kinase from Vibrio cholerae serotype O1 (strain ATCC 39541 / Classical Ogawa 395 / O395).